The sequence spans 397 residues: 8-amino-7-oxononanoate synthase (397 aa).

Arg21 serves as a coordination point for substrate. A pyridoxal 5'-phosphate-binding site is contributed by Gly110–Tyr111. His135 contacts substrate. Ser181, His209, and Thr238 together coordinate pyridoxal 5'-phosphate. Residue Lys241 is modified to N6-(pyridoxal phosphate)lysine. Thr355 lines the substrate pocket.

The protein belongs to the class-II pyridoxal-phosphate-dependent aminotransferase family. BioF subfamily. Homodimer. Pyridoxal 5'-phosphate is required as a cofactor.

It catalyses the reaction 6-carboxyhexanoyl-[ACP] + L-alanine + H(+) = (8S)-8-amino-7-oxononanoate + holo-[ACP] + CO2. Its pathway is cofactor biosynthesis; biotin biosynthesis. In terms of biological role, catalyzes the decarboxylative condensation of pimeloyl-[acyl-carrier protein] and L-alanine to produce 8-amino-7-oxononanoate (AON), [acyl-carrier protein], and carbon dioxide. The protein is 8-amino-7-oxononanoate synthase of Saccharophagus degradans (strain 2-40 / ATCC 43961 / DSM 17024).